A 603-amino-acid chain; its full sequence is Penicillin-binding protein activator LpoA (603 aa).

A signal peptide spans 1-24 (MINHKRLSVPRILTPVALAITLAA). Residue C25 is the site of N-palmitoyl cysteine attachment. The S-diacylglycerol cysteine moiety is linked to residue C25.

Belongs to the LpoA family. In terms of assembly, interacts with PBP1a.

It localises to the cell outer membrane. Functionally, regulator of peptidoglycan synthesis that is essential for the function of penicillin-binding protein 1A (PBP1a). The protein is Penicillin-binding protein activator LpoA of Vibrio antiquarius (strain Ex25).